The chain runs to 307 residues: MSENQQALNHVVSMEDLTVDQVMKLIKRGIEFKNGAQLPYEDHPIVSNLFFEDSTRTHKSFEVAEIKLGLERLDFDVKTSSVNKGETLYDTILTLSALGVDVCVIRHPEVDYYRELIASPTITTSIINGGDGSGQHPSQSLLDLMTIYEEFGHFEGLKVAIAGDLDHSRVAKSNMQILKRLGSELFFAGPEEWRSQEFADYGQFVTIDEIIDQVDVMMFLRVQHERHDSGAVFSKEDYHAQHGLTQERYDRLKETAILMHPAPINRDVEIADHLVEAPKSRIVQQMTNGVFVRMAILESVLASRNAN.

2 residues coordinate carbamoyl phosphate: arginine 56 and threonine 57. Residue lysine 84 coordinates L-aspartate. The carbamoyl phosphate site is built by arginine 106, histidine 136, and glutamine 139. 2 residues coordinate L-aspartate: arginine 169 and arginine 221. Residues alanine 262 and proline 263 each coordinate carbamoyl phosphate.

Belongs to the aspartate/ornithine carbamoyltransferase superfamily. ATCase family. As to quaternary structure, heterododecamer (2C3:3R2) of six catalytic PyrB chains organized as two trimers (C3), and six regulatory PyrI chains organized as three dimers (R2).

It carries out the reaction carbamoyl phosphate + L-aspartate = N-carbamoyl-L-aspartate + phosphate + H(+). It participates in pyrimidine metabolism; UMP biosynthesis via de novo pathway; (S)-dihydroorotate from bicarbonate: step 2/3. Catalyzes the condensation of carbamoyl phosphate and aspartate to form carbamoyl aspartate and inorganic phosphate, the committed step in the de novo pyrimidine nucleotide biosynthesis pathway. This chain is Aspartate carbamoyltransferase catalytic subunit, found in Streptococcus pneumoniae (strain P1031).